The sequence spans 462 residues: Argininosuccinate lyase (462 aa).

It belongs to the lyase 1 family. Argininosuccinate lyase subfamily.

It localises to the cytoplasm. The catalysed reaction is 2-(N(omega)-L-arginino)succinate = fumarate + L-arginine. The protein operates within amino-acid biosynthesis; L-arginine biosynthesis; L-arginine from L-ornithine and carbamoyl phosphate: step 3/3. This Bacillus cereus (strain ZK / E33L) protein is Argininosuccinate lyase.